Here is a 450-residue protein sequence, read N- to C-terminus: Signal recognition particle 54 kDa protein (450 aa).

GTP-binding positions include 107–114 (GIQGSGKT), 188–192 (DTAGR), and 247–250 (TKLD).

The protein belongs to the GTP-binding SRP family. SRP54 subfamily. As to quaternary structure, part of the signal recognition particle protein translocation system, which is composed of SRP and FtsY. Archaeal SRP consists of a 7S RNA molecule of 300 nucleotides and two protein subunits: SRP54 and SRP19.

The protein resides in the cytoplasm. The enzyme catalyses GTP + H2O = GDP + phosphate + H(+). Its function is as follows. Involved in targeting and insertion of nascent membrane proteins into the cytoplasmic membrane. Binds to the hydrophobic signal sequence of the ribosome-nascent chain (RNC) as it emerges from the ribosomes. The SRP-RNC complex is then targeted to the cytoplasmic membrane where it interacts with the SRP receptor FtsY. The chain is Signal recognition particle 54 kDa protein from Methanococcus maripaludis (strain C6 / ATCC BAA-1332).